The sequence spans 285 residues: MKISDVVVELFREAAIYLPEDVKNALEEAYKKESSEISKNTLKAIIENNKIAEETQVPLCQDTGVPIVFLKIGKNINSSEIMKIIEEIKEGVKKATEEVPLRPNVVHPLTRENFKTNVGLNSPFINIEFDESLDREIEIIAFPKGAGSENMSALKMLKPSDGIEGIKNFVLETIANAGGKPCPPIVVGIGIGGTADVALKLAKKALLRKIGERHRDKEIANLEKELLEKINSLGIGAMGLGGDITALDVFIEIAGCHTASLPVGICIQCWADRRAIKRIKLDAKL.

3 residues coordinate iron-sulfur cluster: C60, C182, and C269.

Belongs to the class-I fumarase family. Tetramer of two alpha and two beta subunits. The cofactor is iron-sulfur cluster.

It catalyses the reaction (2R,3R)-tartrate = oxaloacetate + H2O. This Methanocaldococcus jannaschii (strain ATCC 43067 / DSM 2661 / JAL-1 / JCM 10045 / NBRC 100440) (Methanococcus jannaschii) protein is Putative L(+)-tartrate dehydratase subunit alpha.